The sequence spans 148 residues: Large ribosomal subunit protein uL15 (148 aa).

The interval 1–51 is disordered; that stretch reads MNLSSLKPAEGAVKSRKRIGRGPGSGLGGTSTRGHKGAKSRSGYSKKIGFE. Residues 21–31 are compositionally biased toward gly residues; the sequence is RGPGSGLGGTS.

The protein belongs to the universal ribosomal protein uL15 family. Part of the 50S ribosomal subunit.

In terms of biological role, binds to the 23S rRNA. The sequence is that of Large ribosomal subunit protein uL15 from Porphyromonas gingivalis (strain ATCC 33277 / DSM 20709 / CIP 103683 / JCM 12257 / NCTC 11834 / 2561).